The sequence spans 752 residues: DNA ligase (752 aa).

NAD(+) contacts are provided by residues 48 to 52 (DADYD), 97 to 98 (SL), and Glu-131. Lys-133 acts as the N6-AMP-lysine intermediate in catalysis. NAD(+) contacts are provided by Arg-154, Glu-189, Lys-305, and Lys-329. Zn(2+) contacts are provided by Cys-434, Cys-437, Cys-452, and Cys-458. Basic and acidic residues predominate over residues 599 to 615 (ADEGRRASLQPQRDKAW). Residues 599–618 (ADEGRRASLQPQRDKAWADT) are disordered. The 80-residue stretch at 673–752 (ATQSAVAGLT…EQWLDRIGDA (80 aa)) folds into the BRCT domain.

Belongs to the NAD-dependent DNA ligase family. LigA subfamily. Mg(2+) is required as a cofactor. Requires Mn(2+) as cofactor.

It catalyses the reaction NAD(+) + (deoxyribonucleotide)n-3'-hydroxyl + 5'-phospho-(deoxyribonucleotide)m = (deoxyribonucleotide)n+m + AMP + beta-nicotinamide D-nucleotide.. In terms of biological role, DNA ligase that catalyzes the formation of phosphodiester linkages between 5'-phosphoryl and 3'-hydroxyl groups in double-stranded DNA using NAD as a coenzyme and as the energy source for the reaction. It is essential for DNA replication and repair of damaged DNA. The sequence is that of DNA ligase from Jannaschia sp. (strain CCS1).